Here is a 546-residue protein sequence, read N- to C-terminus: ATP-dependent RNA helicase DBP2 (546 aa).

Residues Met-1–Gln-56 are disordered. An omega-N-methylarginine mark is found at Arg-18 and Arg-43. The segment covering Arg-18–Tyr-33 has biased composition (basic and acidic residues). Ser-88 and Ser-90 each carry phosphoserine. The Q motif signature appears at Thr-113 to Cys-141. Positions Trp-144–Val-319 constitute a Helicase ATP-binding domain. An ATP-binding site is contributed by Ala-157–Thr-164. The DEAD box motif lies at Asp-267–Asp-270. A Helicase C-terminal domain is found at Arg-347–Asp-494. Lys-474 participates in a covalent cross-link: Glycyl lysine isopeptide (Lys-Gly) (interchain with G-Cter in ubiquitin). The tract at residues Tyr-493–Tyr-546 is disordered. Residues Tyr-498–Asn-540 show a composition bias toward gly residues. The tract at residues Tyr-505 to Gly-530 is RNA-binding RGG-box. 4 positions are modified to dimethylated arginine; alternate: Arg-509, Arg-512, Arg-518, and Arg-525. Omega-N-methylarginine; alternate occurs at positions 509, 512, 518, and 525.

It belongs to the DEAD box helicase family. DDX5/DBP2 subfamily. Interacts with UPF1. Associates with polysomes.

Its subcellular location is the cytoplasm. It localises to the nucleus. It catalyses the reaction ATP + H2O = ADP + phosphate + H(+). Its function is as follows. ATP-dependent RNA helicase involved nonsense-mediated mRNA decay and ribosome biogenesis through rRNA processing. Associates directly with chromatin, correlating with transcriptional activity. Required for assembly of mRNA-binding proteins YRA1, NAB2, and MEX67 onto poly(A)+ RNA. In Saccharomyces cerevisiae (strain ATCC 204508 / S288c) (Baker's yeast), this protein is ATP-dependent RNA helicase DBP2.